The chain runs to 485 residues: UDP-N-acetylmuramate--L-alanine ligase (485 aa).

120 to 126 contacts ATP; it reads GSHGKTT.

This sequence belongs to the MurCDEF family.

It is found in the cytoplasm. It catalyses the reaction UDP-N-acetyl-alpha-D-muramate + L-alanine + ATP = UDP-N-acetyl-alpha-D-muramoyl-L-alanine + ADP + phosphate + H(+). It functions in the pathway cell wall biogenesis; peptidoglycan biosynthesis. Functionally, cell wall formation. The polypeptide is UDP-N-acetylmuramate--L-alanine ligase (Rickettsia massiliae (strain Mtu5)).